A 579-amino-acid polypeptide reads, in one-letter code: MAFCISYLGAVLPFSLSPRTKFAIFHNTSKHAAYKTCRWNIPRDVGSTPPPSKLHQALCLNAHSTSCMAELPMDYEGKIQGTRHLLHLKDENDPIESLIFVDATQRLGVNHHFQKEIEEILRKSYATMKSPSICKYHTLHDVSLFFCLMRQHGRYVSADVFNNFKGESGRFKEELKRDTRGLVELYEAAQLSFEGERILDEAENFSRQILHGNLASMEDNLRRSVGNKLRYPFHKSIARFTGINYDDDLGGMYEWGKTLRELALMDLQVERSVYQEELLQVSKWWNELGLYKKLTLARNRPFEFYMWSMVILTDYINLSEQRVELTKSVAFIYLIDDIFDVYGTLDELIIFTEAVNKWDYSATDTLPDNMKMCYMTLLDTINGTSQKIYEKYGHNPIDSLKTTWKSLCSAFLVEAKWSASGSLPSANEYLENEKVSSGVYVVLIHLFFLMGLGGTNRGSIELNDTRELMSSIAIIVRIWNDLGCAKNEHQNGKDGSYLDCYKKEHINLTAAQVHEHALELVAIEWKRLNKESFNLNHDSVSSFKQAALNFARMVPLMYSYDNNRRGPVLEEYVKFMLSD.

Residues 1 to 66 constitute a chloroplast transit peptide; that stretch reads MAFCISYLGA…ALCLNAHSTS (66 aa). 3 N-linked (GlcNAc...) asparagine glycosylation sites follow: N27, N204, and N317. Residues D336 and D340 each contribute to the Mg(2+) site. The short motif at 336–340 is the DDXXD motif element; the sequence is DDIFD. Residues N382 and N463 are each glycosylated (N-linked (GlcNAc...) asparagine). Mg(2+)-binding residues include N480 and E488. N507 carries an N-linked (GlcNAc...) asparagine glycan.

It belongs to the terpene synthase family. Tpsg subfamily. Mg(2+) serves as cofactor. Requires Mn(2+) as cofactor. In terms of tissue distribution, accumulates in flowers; mostly expressed in both upper and lower petal lobes, and, to a lower extent, in tube and stamens.

It is found in the plastid. The protein localises to the chloroplast stroma. The catalysed reaction is (2E)-geranyl diphosphate = tricyclene + diphosphate. It catalyses the reaction (2E)-geranyl diphosphate = (E)-beta-ocimene + diphosphate. It participates in secondary metabolite biosynthesis; terpenoid biosynthesis. In terms of biological role, contributes to floral scent emission. The polypeptide is Tricyclene synthase 0e23, chloroplastic (0e23) (Antirrhinum majus (Garden snapdragon)).